A 114-amino-acid chain; its full sequence is Superoxide dismutase [Cu-Zn] (114 aa).

Cu cation-binding residues include histidine 37, histidine 39, and histidine 54. The interval 49–73 (MSSGPHYNPRNKEHGAPTDENRHLG) is disordered. 4 residues coordinate Zn(2+): histidine 54, histidine 62, histidine 71, and aspartate 74. Over residues 58–73 (RNKEHGAPTDENRHLG) the composition is skewed to basic and acidic residues. Histidine 111 contributes to the Cu cation binding site.

Belongs to the Cu-Zn superoxide dismutase family. As to quaternary structure, homodimer. The cofactor is Cu cation. Zn(2+) serves as cofactor.

It is found in the cytoplasm. The catalysed reaction is 2 superoxide + 2 H(+) = H2O2 + O2. Destroys radicals which are normally produced within the cells and which are toxic to biological systems. This is Superoxide dismutase [Cu-Zn] from Drosophila madeirensis (Fruit fly).